The chain runs to 480 residues: Vacuolar amino acid transporter 2 (480 aa).

The tract at residues 21-48 is disordered; it reads LTNFPFPGTTDNDSDDGSQGQNSLNIIT. The segment covering 37–46 has biased composition (polar residues); that stretch reads GSQGQNSLNI. 9 consecutive transmembrane segments (helical) span residues 72 to 92, 95 to 115, 145 to 165, 214 to 234, 263 to 283, 297 to 317, 338 to 358, 394 to 414, and 447 to 467; these read AFMNLANSILGAGIITQPFAI, AGILGGLLSYVALGFIVDWTL, LILFTNGLFAFGGCIGYCIII, LSKASFLAVISMIIIVLTVVI, LSVISFALVCHHNTSFIFFSM, ISIIISVICCALMGYSGFAVF, IARLCFGFNMLTTFPMEIFVL, VFITMGISLTTCNLGALFELI, and FYLCICFGFMIMIISSTQTII.

The protein belongs to the amino acid/polyamine transporter 2 family.

It is found in the vacuole membrane. Its function is as follows. Probable amino acid transporter of unknown specificity. This Saccharomyces cerevisiae (strain ATCC 204508 / S288c) (Baker's yeast) protein is Vacuolar amino acid transporter 2 (AVT2).